We begin with the raw amino-acid sequence, 1178 residues long: DNA-directed RNA polymerase subunit beta' (1178 aa).

4 residues coordinate Zn(2+): cysteine 60, cysteine 62, cysteine 75, and cysteine 78. 3 residues coordinate Mg(2+): aspartate 450, aspartate 452, and aspartate 454. Zn(2+)-binding residues include cysteine 795, cysteine 869, cysteine 876, and cysteine 879.

Belongs to the RNA polymerase beta' chain family. As to quaternary structure, the RNAP catalytic core consists of 2 alpha, 1 beta, 1 beta' and 1 omega subunit. When a sigma factor is associated with the core the holoenzyme is formed, which can initiate transcription. Mg(2+) is required as a cofactor. The cofactor is Zn(2+).

The catalysed reaction is RNA(n) + a ribonucleoside 5'-triphosphate = RNA(n+1) + diphosphate. Functionally, DNA-dependent RNA polymerase catalyzes the transcription of DNA into RNA using the four ribonucleoside triphosphates as substrates. This Clostridium botulinum (strain Loch Maree / Type A3) protein is DNA-directed RNA polymerase subunit beta'.